Reading from the N-terminus, the 470-residue chain is Neuraminidase (470 aa).

The Intravirion portion of the chain corresponds to 1–6 (MNPNQK). The helical transmembrane segment at 7 to 27 (IITIGSICMAIGIISLILQIG) threads the bilayer. An involved in apical transport and lipid raft association region spans residues 11-33 (GSICMAIGIISLILQIGNIISIW). Residues 28-470 (NIISIWVSHS…GAELPFTIDK (443 aa)) lie on the Virion surface side of the membrane. Residues 36-90 (HSIQTGSQNHTGICNQRIITYENSTWVNQTYVNISNTNVVAGKDTTSMTLAGNSS) form a hypervariable stalk region region. 5 N-linked (GlcNAc...) asparagine; by host glycosylation sites follow: N44, N58, N63, N68, and N88. Positions 91–470 (LCPIRGWAIY…GAELPFTIDK (380 aa)) are head of neuraminidase. 8 disulfide bridges follow: C92/C417, C124/C129, C184/C231, C233/C238, C279/C292, C281/C290, C318/C335, and C421/C447. R118 provides a ligand contact to substrate. N146 is a glycosylation site (N-linked (GlcNAc...) asparagine; by host). The active-site Proton donor/acceptor is D151. R152 serves as a coordination point for substrate. An N-linked (GlcNAc...) asparagine; by host glycan is attached at N235. 277–278 (EE) contacts substrate. R293 provides a ligand contact to substrate. Ca(2+) contacts are provided by D294, G298, and D324. N365 carries an N-linked (GlcNAc...) asparagine; by host glycan. R368 lines the substrate pocket. Y402 functions as the Nucleophile in the catalytic mechanism. N455 carries N-linked (GlcNAc...) asparagine; by host glycosylation.

Belongs to the glycosyl hydrolase 34 family. Homotetramer. Requires Ca(2+) as cofactor. Post-translationally, N-glycosylated.

The protein resides in the virion membrane. The protein localises to the host apical cell membrane. It carries out the reaction Hydrolysis of alpha-(2-&gt;3)-, alpha-(2-&gt;6)-, alpha-(2-&gt;8)- glycosidic linkages of terminal sialic acid residues in oligosaccharides, glycoproteins, glycolipids, colominic acid and synthetic substrates.. With respect to regulation, inhibited by the neuraminidase inhibitors zanamivir (Relenza) and oseltamivir (Tamiflu). These drugs interfere with the release of progeny virus from infected cells and are effective against all influenza strains. Resistance to neuraminidase inhibitors is quite rare. Catalyzes the removal of terminal sialic acid residues from viral and cellular glycoconjugates. Cleaves off the terminal sialic acids on the glycosylated HA during virus budding to facilitate virus release. Additionally helps virus spread through the circulation by further removing sialic acids from the cell surface. These cleavages prevent self-aggregation and ensure the efficient spread of the progeny virus from cell to cell. Otherwise, infection would be limited to one round of replication. Described as a receptor-destroying enzyme because it cleaves a terminal sialic acid from the cellular receptors. May facilitate viral invasion of the upper airways by cleaving the sialic acid moieties on the mucin of the airway epithelial cells. Likely to plays a role in the budding process through its association with lipid rafts during intracellular transport. May additionally display a raft-association independent effect on budding. Plays a role in the determination of host range restriction on replication and virulence. Sialidase activity in late endosome/lysosome traffic seems to enhance virus replication. In Aves (Human), this protein is Neuraminidase.